A 515-amino-acid chain; its full sequence is Tripartite motif-containing protein 5 (515 aa).

N-acetylalanine is present on alanine 2. The RING-type zinc-finger motif lies at cysteine 15–arginine 60. Serine 87 carries the phosphoserine modification. Residues glutamine 92–methionine 133 form a B box-type zinc finger. Positions 97, 100, 119, and 125 each coordinate Zn(2+). Positions alanine 137–glutamine 225 form a coiled coil. A required for interaction with GABARAP and for autophagy region spans residues phenylalanine 187–asparagine 200. The 233-residue stretch at leucine 283–serine 515 folds into the B30.2/SPRY domain.

The protein belongs to the TRIM/RBCC family. In terms of assembly, can form homodimers and homotrimers. In addition to lower-order dimerization, also exhibits a higher-order multimerization and both low- and high-order multimerizations are essential for its restriction activity. Interacts with BTBD1 and BTBD2. Interacts with PSMC4, PSMC5, PSMD7 and HSPA8/HSC70. Interacts (via B30.2/SPRY domain) with HSPA1A/B. Interacts with PSMC2, MAP3K7/TAK1, TAB2 and TAB3. Interacts with SQSTM1. Interacts with TRIM6 and TRIM34. Interacts with ULK1 (phosphorylated form), GABARAP, GABARAPL1, GABARAPL2, MAP1LC3A, MAP1LC3C and BECN1. In terms of processing, degraded in a proteasome-independent fashion in the absence of viral infection but in a proteasome-dependent fashion following exposure to restriction sensitive virus. Autoubiquitinated in a RING finger- and UBE2D2-dependent manner. Monoubiquitinated by TRIM21. Deubiquitinated by Yersinia YopJ. Ubiquitination may not lead to proteasomal degradation.

The protein localises to the cytoplasm. It is found in the nucleus. It carries out the reaction S-ubiquitinyl-[E2 ubiquitin-conjugating enzyme]-L-cysteine + [acceptor protein]-L-lysine = [E2 ubiquitin-conjugating enzyme]-L-cysteine + N(6)-ubiquitinyl-[acceptor protein]-L-lysine.. The protein operates within protein modification; protein ubiquitination. Capsid-specific restriction factor that prevents infection from non-host-adapted retroviruses. Blocks viral replication early in the life cycle, after viral entry but before reverse transcription. In addition to acting as a capsid-specific restriction factor, also acts as a pattern recognition receptor that activates innate immune signaling in response to the retroviral capsid lattice. Binding to the viral capsid triggers its E3 ubiquitin ligase activity, and in concert with the heterodimeric ubiquitin conjugating enzyme complex UBE2V1-UBE2N (also known as UBC13-UEV1A complex) generates 'Lys-63'-linked polyubiquitin chains, which in turn are catalysts in the autophosphorylation of the MAP3K7/TAK1 complex (includes TAK1, TAB2, and TAB3). Activation of the MAP3K7/TAK1 complex by autophosphorylation results in the induction and expression of NF-kappa-B and MAPK-responsive inflammatory genes, thereby leading to an innate immune response in the infected cell. Restricts infection by human immunodeficiency virus type 1 (HIV-1), simian immunodeficiency virus (SIV-mac) and N-tropic murine leukemia viruse (N-MLV). Plays a role in regulating autophagy through activation of autophagy regulator BECN1 by causing its dissociation from its inhibitors BCL2 and TAB2. This chain is Tripartite motif-containing protein 5 (TRIM5), found in Chlorocebus tantalus (Tantalus monkey).